The sequence spans 391 residues: Xylose isomerase (391 aa).

Residues histidine 54 and aspartate 57 contribute to the active site. The Mg(2+) site is built by glutamate 181, glutamate 217, histidine 220, aspartate 245, aspartate 255, aspartate 257, and aspartate 287.

This sequence belongs to the xylose isomerase family. In terms of assembly, homotetramer. It depends on Mg(2+) as a cofactor.

It is found in the cytoplasm. It catalyses the reaction alpha-D-xylose = alpha-D-xylulofuranose. In terms of biological role, involved in D-xylose catabolism. The sequence is that of Xylose isomerase (xylA) from Streptomyces albus G.